Reading from the N-terminus, the 272-residue chain is Ethanolamine ammonia-lyase small subunit (272 aa).

Adenosylcob(III)alamin-binding residues include valine 161, glutamate 182, and cysteine 211.

This sequence belongs to the EutC family. As to quaternary structure, the basic unit is a heterodimer which dimerizes to form tetramers. The heterotetramers trimerize; 6 large subunits form a core ring with 6 small subunits projecting outwards. Requires adenosylcob(III)alamin as cofactor.

It is found in the bacterial microcompartment. It carries out the reaction ethanolamine = acetaldehyde + NH4(+). The protein operates within amine and polyamine degradation; ethanolamine degradation. Its function is as follows. Catalyzes the deamination of various vicinal amino-alcohols to oxo compounds. Allows this organism to utilize ethanolamine as the sole source of nitrogen and carbon in the presence of external vitamin B12. This Xanthomonas campestris pv. campestris (strain ATCC 33913 / DSM 3586 / NCPPB 528 / LMG 568 / P 25) protein is Ethanolamine ammonia-lyase small subunit.